The chain runs to 307 residues: MGQHNLTVLTEFILMELTRRPELQIPLFGVFLVIYLITVVGNLTMIILTKLDSHLHTPMYFSIRHLAFVDLGNSTVICPKVLANFVVDRNTISYYACAAQLAFFLMFIISEFFILSAMAYDRYVAICNPLLYYVIMSQRLCHVLVGIQYLYSTFQALMFTIKIFTLTFCGSNVISHFYCDDVPLLPMLCSNAQEIELLSILFSVFNLISSFLIVLVSYMLILLAICQMHSAEGRKKAFSTCGSHLTVVVVFYGSLLFMYMQPNSTHFFDTDKMASVFYTLVIPMLNPLIYSLRNEEVKNAFYKLFEN.

The Extracellular segment spans residues 1 to 25 (MGQHNLTVLTEFILMELTRRPELQI). N5 is a glycosylation site (N-linked (GlcNAc...) asparagine). A helical membrane pass occupies residues 26–46 (PLFGVFLVIYLITVVGNLTMI). The Cytoplasmic segment spans residues 47–54 (ILTKLDSH). A helical membrane pass occupies residues 55-75 (LHTPMYFSIRHLAFVDLGNST). At 76-99 (VICPKVLANFVVDRNTISYYACAA) the chain is on the extracellular side. A disulfide bond links C97 and C189. Residues 100-120 (QLAFFLMFIISEFFILSAMAY) traverse the membrane as a helical segment. The Cytoplasmic segment spans residues 121 to 139 (DRYVAICNPLLYYVIMSQR). The chain crosses the membrane as a helical span at residues 140–160 (LCHVLVGIQYLYSTFQALMFT). Residues 161–197 (IKIFTLTFCGSNVISHFYCDDVPLLPMLCSNAQEIEL) lie on the Extracellular side of the membrane. The helical transmembrane segment at 198-217 (LSILFSVFNLISSFLIVLVS) threads the bilayer. Residues 218–237 (YMLILLAICQMHSAEGRKKA) are Cytoplasmic-facing. Residues 238-258 (FSTCGSHLTVVVVFYGSLLFM) form a helical membrane-spanning segment. Over 259–271 (YMQPNSTHFFDTD) the chain is Extracellular. The N-linked (GlcNAc...) asparagine glycan is linked to N263. Residues 272 to 292 (KMASVFYTLVIPMLNPLIYSL) form a helical membrane-spanning segment. Residues 293–307 (RNEEVKNAFYKLFEN) are Cytoplasmic-facing.

Belongs to the G-protein coupled receptor 1 family.

It localises to the cell membrane. Odorant receptor. This Homo sapiens (Human) protein is Olfactory receptor 8K5 (OR8K5).